The sequence spans 102 residues: Small ribosomal subunit protein uS10 (102 aa).

It belongs to the universal ribosomal protein uS10 family. In terms of assembly, part of the 30S ribosomal subunit.

Involved in the binding of tRNA to the ribosomes. The sequence is that of Small ribosomal subunit protein uS10 from Arthrobacter sp. (strain FB24).